The primary structure comprises 717 residues: uncharacterized protein (717 aa).

The protein belongs to the asfivirus C717R family.

The protein resides in the virion. This is an uncharacterized protein from Ornithodoros (relapsing fever ticks).